The sequence spans 702 residues: Phosphoglycerol transferase I (702 aa).

3 consecutive transmembrane segments (helical) span residues 2–22 (HWML…SPRL), 71–91 (FSGY…PLLL), and 103–123 (GGAV…ASPL).

This sequence belongs to the OpgB family.

It localises to the cell inner membrane. The catalysed reaction is a phosphatidylglycerol + a membrane-derived-oligosaccharide D-glucose = a 1,2-diacyl-sn-glycerol + a membrane-derived-oligosaccharide 6-(glycerophospho)-D-glucose.. It functions in the pathway glycan metabolism; osmoregulated periplasmic glucan (OPG) biosynthesis. In terms of biological role, transfers a phosphoglycerol residue from phosphatidylglycerol to the membrane-bound nascent glucan backbones. The sequence is that of Phosphoglycerol transferase I from Xanthomonas euvesicatoria pv. vesicatoria (strain 85-10) (Xanthomonas campestris pv. vesicatoria).